The following is a 475-amino-acid chain: Luvungin A synthase CYP716AC1 (475 aa).

Residues F3–I23 traverse the membrane as a helical segment. Residue C423 participates in heme binding.

The protein belongs to the cytochrome P450 family. Heme is required as a cofactor. In terms of tissue distribution, expressed in flowers, maturing fruits and in juice vesicles.

Its subcellular location is the membrane. The enzyme catalyses (21S)-21-acetoxyl-apo-melianone + reduced [NADPH--hemoprotein reductase] + O2 = luvungin A + oxidized [NADPH--hemoprotein reductase] + H2O + H(+). Its pathway is secondary metabolite biosynthesis; terpenoid biosynthesis. Its function is as follows. Monooxygenase involved in the biosynthesis of limonoids triterpene natural products such as limonin, a compound with insecticidal activity responsible for the bitter taste in citrus. Catalyzes the conversion of (21S)-21-acetoxyl-apo-melianone to luvungin A. This chain is Luvungin A synthase CYP716AC1, found in Citrus sinensis (Sweet orange).